The chain runs to 390 residues: uncharacterized protein (390 aa).

The region spanning 215–325 (SRFKRKTLGK…KLIKDCEMVE (111 aa)) is the Glutaredoxin domain.

This is an uncharacterized protein from Arabidopsis thaliana (Mouse-ear cress).